A 103-amino-acid chain; its full sequence is Putative membrane protein insertion efficiency factor (103 aa).

Residues 68 to 103 (HEGGYDPVPLAKQDAKPENNSESESLLNQPTETKSL) form a disordered region. Over residues 87 to 103 (NSESESLLNQPTETKSL) the composition is skewed to polar residues.

Belongs to the UPF0161 family.

It is found in the cell inner membrane. Could be involved in insertion of integral membrane proteins into the membrane. The protein is Putative membrane protein insertion efficiency factor of Idiomarina loihiensis (strain ATCC BAA-735 / DSM 15497 / L2-TR).